The chain runs to 339 residues: tRNA N6-adenosine threonylcarbamoyltransferase (339 aa).

The Fe cation site is built by histidine 117 and histidine 121. Substrate is bound by residues valine 140–glycine 144, aspartate 173, glycine 186, and asparagine 279. Fe cation is bound at residue aspartate 307.

This sequence belongs to the KAE1 / TsaD family. Fe(2+) serves as cofactor.

It is found in the cytoplasm. The enzyme catalyses L-threonylcarbamoyladenylate + adenosine(37) in tRNA = N(6)-L-threonylcarbamoyladenosine(37) in tRNA + AMP + H(+). Functionally, required for the formation of a threonylcarbamoyl group on adenosine at position 37 (t(6)A37) in tRNAs that read codons beginning with adenine. Is involved in the transfer of the threonylcarbamoyl moiety of threonylcarbamoyl-AMP (TC-AMP) to the N6 group of A37, together with TsaE and TsaB. TsaD likely plays a direct catalytic role in this reaction. The polypeptide is tRNA N6-adenosine threonylcarbamoyltransferase (Syntrophomonas wolfei subsp. wolfei (strain DSM 2245B / Goettingen)).